The chain runs to 303 residues: Elongation factor Ts (303 aa).

Residues threonine 80–valine 83 are involved in Mg(2+) ion dislocation from EF-Tu.

Belongs to the EF-Ts family.

Its subcellular location is the cytoplasm. Associates with the EF-Tu.GDP complex and induces the exchange of GDP to GTP. It remains bound to the aminoacyl-tRNA.EF-Tu.GTP complex up to the GTP hydrolysis stage on the ribosome. This Clostridium botulinum (strain Eklund 17B / Type B) protein is Elongation factor Ts.